The chain runs to 291 residues: ATP synthase gamma chain (291 aa).

Belongs to the ATPase gamma chain family. As to quaternary structure, F-type ATPases have 2 components, CF(1) - the catalytic core - and CF(0) - the membrane proton channel. CF(1) has five subunits: alpha(3), beta(3), gamma(1), delta(1), epsilon(1). CF(0) has three main subunits: a, b and c.

It localises to the cell inner membrane. Functionally, produces ATP from ADP in the presence of a proton gradient across the membrane. The gamma chain is believed to be important in regulating ATPase activity and the flow of protons through the CF(0) complex. This Variovorax paradoxus (strain S110) protein is ATP synthase gamma chain.